Consider the following 106-residue polypeptide: Nucleoid-associated protein DP1429 (106 aa).

The protein belongs to the YbaB/EbfC family. In terms of assembly, homodimer.

The protein localises to the cytoplasm. It localises to the nucleoid. In terms of biological role, binds to DNA and alters its conformation. May be involved in regulation of gene expression, nucleoid organization and DNA protection. The sequence is that of Nucleoid-associated protein DP1429 from Desulfotalea psychrophila (strain LSv54 / DSM 12343).